A 573-amino-acid polypeptide reads, in one-letter code: Proton-coupled zinc antiporter SLC30A9, mitochondrial (573 aa).

The segment at 66 to 108 (NCSTSGSGKDGSPTRPEEPKTTEKAQAAQPAAKGAGSKPQGLT) is disordered. Low complexity predominate over residues 90-104 (AQAAQPAAKGAGSKP). The next 5 membrane-spanning stretches (helical) occupy residues 244-264 (VVMVAICINGLNFFFKLLAWV), 319-339 (GVGIFMMGAGLSWYHGIMGLL), 347-367 (LLWAYCILAGSLVSEGATLLV), 397-417 (VVLLEDAAAVLGVVLAAGCMG), and 429-449 (SLGSLGVGTLLGTVSAFLIYT). The LXXLL motif signature appears at 467–471 (LTEFL).

Belongs to the cation diffusion facilitator (CDF) transporter (TC 2.A.4) family. SLC30A subfamily.

It is found in the mitochondrion membrane. The protein localises to the nucleus. The protein resides in the endoplasmic reticulum. The enzyme catalyses Zn(2+)(in) + 2 H(+)(out) = Zn(2+)(out) + 2 H(+)(in). In terms of biological role, mitochondrial proton-coupled zinc ion antiporter mediating the export of zinc from the mitochondria and involved in zinc homeostasis, zinc mobilization as well as mitochondrial morphology and health. In nucleus, may function as a secondary coactivator for nuclear receptors. The polypeptide is Proton-coupled zinc antiporter SLC30A9, mitochondrial (slc30a9) (Danio rerio (Zebrafish)).